Reading from the N-terminus, the 179-residue chain is Isopentenyl-diphosphate Delta-isomerase (179 aa).

Mn(2+)-binding residues include histidine 24 and histidine 30. Residues 28–160 (LLHRAFSIFI…PEKFTVWFLT (133 aa)) enclose the Nudix hydrolase domain. The active site involves cysteine 65. Histidine 67 contacts Mn(2+). Residue glutamate 85 coordinates Mg(2+). Mn(2+)-binding residues include glutamate 110 and glutamate 112. The active site involves glutamate 112.

It belongs to the IPP isomerase type 1 family. As to quaternary structure, homodimer. The cofactor is Mg(2+). Requires Mn(2+) as cofactor.

The protein localises to the cytoplasm. The enzyme catalyses isopentenyl diphosphate = dimethylallyl diphosphate. The protein operates within isoprenoid biosynthesis; dimethylallyl diphosphate biosynthesis; dimethylallyl diphosphate from isopentenyl diphosphate: step 1/1. Functionally, catalyzes the 1,3-allylic rearrangement of the homoallylic substrate isopentenyl (IPP) to its highly electrophilic allylic isomer, dimethylallyl diphosphate (DMAPP). The chain is Isopentenyl-diphosphate Delta-isomerase from Serratia proteamaculans (strain 568).